Here is a 191-residue protein sequence, read N- to C-terminus: FAD-linked sulfhydryl oxidase ERV1 (191 aa).

An ERV/ALR sulfhydryl oxidase domain is found at 72–172 (GPVTKEDLGR…FPCERVDARW (101 aa)). Positions 76, 81, 84, 121, 125, 148, 151, 152, 155, 160, and 171 each coordinate FAD. A disulfide bridge links Cys119 with Cys122. The cysteines at positions 148 and 165 are disulfide-linked. An intrachain disulfide couples Cys177 to Cys182. A Required for dimerization and substrate specificity motif is present at residues 177–182 (CEQKSC).

In terms of assembly, homodimer. FAD serves as cofactor. Contains three disulfide bonds; one catalytic disulfide (Cys-119 to Cys-122), one structural disulfide (Cys-148 to Cys-165), and one shuttle disulfide (Cys-177 to Cys-182).

The protein resides in the mitochondrion. It carries out the reaction 2 R'C(R)SH + O2 = R'C(R)S-S(R)CR' + H2O2. Functionally, FAD-dependent sulfhydryl oxidase that catalyzes disulfide bond formation. Oxidizes thioredoxin in vitro. Required for the import and folding of small cysteine-containing proteins in the mitochondrial intermembrane space, and can act independently of the oxidoreductase MIA40. Can oxidize the cytochrome c oxidase assembly protein COX19, a typical substrate of MIA40. The chain is FAD-linked sulfhydryl oxidase ERV1 (ERV1) from Arabidopsis thaliana (Mouse-ear cress).